Consider the following 337-residue polypeptide: 2-oxoglutarate-dependent dioxygenase 19 (337 aa).

Residues 1–25 are disordered; that stretch reads MVAPSRLPSHEEQSAAAAADGSATP. The region spanning 179–283 is the Fe2OG dioxygenase domain; it reads NLESCFQILV…RMSFVSLIGP (105 aa). Residues His-208, Asp-210, and His-264 each contribute to the Fe cation site. A 2-oxoglutarate-binding site is contributed by Arg-274.

Belongs to the iron/ascorbate-dependent oxidoreductase family. Fe(2+) serves as cofactor. It depends on L-ascorbate as a cofactor. Expressed in shoots.

The protein resides in the cytoplasm. The catalysed reaction is melatonin + 2-oxoglutarate + O2 = 2-hydroxymelatonin + succinate + CO2. Involved in melatonin degradation. Catalyzes the hydroxylation of melatonin to produce 2-hydroxymelatonin. This is 2-oxoglutarate-dependent dioxygenase 19 from Oryza sativa subsp. japonica (Rice).